Here is a 350-residue protein sequence, read N- to C-terminus: Protein-glutamate methylesterase/protein-glutamine glutaminase (350 aa).

The 118-residue stretch at 5-122 (KVLCVDDSAL…RDGLIEYSEV (118 aa)) folds into the Response regulatory domain. Residue D56 is modified to 4-aspartylphosphate. Positions 152–346 (PFASSEKLVI…ERILTRLGDR (195 aa)) constitute a CheB-type methylesterase domain. Active-site residues include S165, H191, and D288.

The protein belongs to the CheB family. In terms of processing, phosphorylated by CheA. Phosphorylation of the N-terminal regulatory domain activates the methylesterase activity.

Its subcellular location is the cytoplasm. It carries out the reaction [protein]-L-glutamate 5-O-methyl ester + H2O = L-glutamyl-[protein] + methanol + H(+). The enzyme catalyses L-glutaminyl-[protein] + H2O = L-glutamyl-[protein] + NH4(+). In terms of biological role, involved in chemotaxis. Part of a chemotaxis signal transduction system that modulates chemotaxis in response to various stimuli. Catalyzes the demethylation of specific methylglutamate residues introduced into the chemoreceptors (methyl-accepting chemotaxis proteins or MCP) by CheR. Also mediates the irreversible deamidation of specific glutamine residues to glutamic acid. The chain is Protein-glutamate methylesterase/protein-glutamine glutaminase from Bordetella parapertussis (strain 12822 / ATCC BAA-587 / NCTC 13253).